The primary structure comprises 170 residues: Crossover junction endodeoxyribonuclease RuvC (170 aa).

Residues Asp-11, Glu-71, and Asp-143 contribute to the active site. Positions 11, 71, and 143 each coordinate Mg(2+).

This sequence belongs to the RuvC family. As to quaternary structure, homodimer which binds Holliday junction (HJ) DNA. The HJ becomes 2-fold symmetrical on binding to RuvC with unstacked arms; it has a different conformation from HJ DNA in complex with RuvA. In the full resolvosome a probable DNA-RuvA(4)-RuvB(12)-RuvC(2) complex forms which resolves the HJ. Mg(2+) serves as cofactor.

The protein localises to the cytoplasm. It carries out the reaction Endonucleolytic cleavage at a junction such as a reciprocal single-stranded crossover between two homologous DNA duplexes (Holliday junction).. In terms of biological role, the RuvA-RuvB-RuvC complex processes Holliday junction (HJ) DNA during genetic recombination and DNA repair. Endonuclease that resolves HJ intermediates. Cleaves cruciform DNA by making single-stranded nicks across the HJ at symmetrical positions within the homologous arms, yielding a 5'-phosphate and a 3'-hydroxyl group; requires a central core of homology in the junction. The consensus cleavage sequence is 5'-(A/T)TT(C/G)-3'. Cleavage occurs on the 3'-side of the TT dinucleotide at the point of strand exchange. HJ branch migration catalyzed by RuvA-RuvB allows RuvC to scan DNA until it finds its consensus sequence, where it cleaves and resolves the cruciform DNA. In Agrobacterium fabrum (strain C58 / ATCC 33970) (Agrobacterium tumefaciens (strain C58)), this protein is Crossover junction endodeoxyribonuclease RuvC.